The primary structure comprises 582 residues: ATP-dependent lipid A-core flippase (582 aa).

5 helical membrane passes run 16–36 (LWPT…ALIL), 63–83 (VLVW…ITSY), 153–173 (IIGL…ILIV), 253–273 (PIIQ…ASFP), and 275–295 (VMDS…IALM). Positions 28 to 310 (IVAGVALILN…LTNVNAQFQR (283 aa)) constitute an ABC transmembrane type-1 domain. An ABC transporter domain is found at 342-578 (VEFRNVTFTY…RGVYAQLHKM (237 aa)). 376-383 (GRSGSGKS) is a binding site for ATP.

The protein belongs to the ABC transporter superfamily. Lipid exporter (TC 3.A.1.106) family. Homodimer.

It is found in the cell inner membrane. It catalyses the reaction ATP + H2O + lipid A-core oligosaccharideSide 1 = ADP + phosphate + lipid A-core oligosaccharideSide 2.. Functionally, involved in lipopolysaccharide (LPS) biosynthesis. Translocates lipid A-core from the inner to the outer leaflet of the inner membrane. Transmembrane domains (TMD) form a pore in the inner membrane and the ATP-binding domain (NBD) is responsible for energy generation. The polypeptide is ATP-dependent lipid A-core flippase (Escherichia coli O157:H7).